A 122-amino-acid chain; its full sequence is Beta-2-microglobulin (122 aa).

The first 22 residues, 1–22 (MMARIFILALLGQLCFLPYLDA), serve as a signal peptide directing secretion. The region spanning 27–115 (PKVQVYSRHP…HLTLQEPKVV (89 aa)) is the Ig-like C1-type domain. The cysteines at positions 47 and 102 are disulfide-linked.

It belongs to the beta-2-microglobulin family. Heterodimer of an alpha chain and a beta chain. Beta-2-microglobulin is the beta-chain of major histocompatibility complex class I molecules.

Its subcellular location is the secreted. Component of the class I major histocompatibility complex (MHC). Involved in the presentation of peptide antigens to the immune system. This chain is Beta-2-microglobulin (B2M), found in Trichosurus vulpecula (Brush-tailed possum).